The chain runs to 304 residues: Methionyl-tRNA formyltransferase (304 aa).

Ser106–Pro109 is a (6S)-5,6,7,8-tetrahydrofolate binding site.

It belongs to the Fmt family.

The catalysed reaction is L-methionyl-tRNA(fMet) + (6R)-10-formyltetrahydrofolate = N-formyl-L-methionyl-tRNA(fMet) + (6S)-5,6,7,8-tetrahydrofolate + H(+). Attaches a formyl group to the free amino group of methionyl-tRNA(fMet). The formyl group appears to play a dual role in the initiator identity of N-formylmethionyl-tRNA by promoting its recognition by IF2 and preventing the misappropriation of this tRNA by the elongation apparatus. This chain is Methionyl-tRNA formyltransferase, found in Thermosipho africanus (strain TCF52B).